The following is a 235-amino-acid chain: dITP/XTP pyrophosphatase (235 aa).

7–12 (STNPGK) is a binding site for substrate. D70 serves as the catalytic Proton acceptor. D70 is a Mg(2+) binding site. Substrate contacts are provided by residues S71, 180-183 (FGYD), K211, and 216-217 (HR).

This sequence belongs to the HAM1 NTPase family. Homodimer. Requires Mg(2+) as cofactor.

It catalyses the reaction XTP + H2O = XMP + diphosphate + H(+). The enzyme catalyses dITP + H2O = dIMP + diphosphate + H(+). The catalysed reaction is ITP + H2O = IMP + diphosphate + H(+). In terms of biological role, pyrophosphatase that catalyzes the hydrolysis of nucleoside triphosphates to their monophosphate derivatives, with a high preference for the non-canonical purine nucleotides XTP (xanthosine triphosphate), dITP (deoxyinosine triphosphate) and ITP. Seems to function as a house-cleaning enzyme that removes non-canonical purine nucleotides from the nucleotide pool, thus preventing their incorporation into DNA/RNA and avoiding chromosomal lesions. This is dITP/XTP pyrophosphatase from Anaeromyxobacter dehalogenans (strain 2CP-C).